A 484-amino-acid chain; its full sequence is Acid alpha-amylase (484 aa).

Asn-24 is a glycosylation site (N-linked (GlcNAc...) asparagine). Cys-30 and Cys-38 are disulfide-bonded. Residue Trp-83 participates in substrate binding. Asp-121 is a Ca(2+) binding site. His-122 serves as a coordination point for substrate. Cys-150 and Cys-164 are oxidised to a cystine. A glycan (N-linked (GlcNAc...) asparagine) is linked at Asn-157. The Ca(2+) site is built by Glu-162 and Asp-175. The N-linked (GlcNAc...) asparagine glycan is linked to Asn-197. Arg-204 is a substrate binding site. Ca(2+) is bound by residues Asp-206, Glu-210, and Glu-230. The active-site Nucleophile is Asp-206. Residue 209–210 coordinates substrate; the sequence is LE. Glu-230 (proton donor) is an active-site residue. Position 234 (Gly-234) interacts with substrate. Cys-240 and Cys-283 are joined by a disulfide. The substrate site is built by Asp-297 and Arg-344. A disulfide bridge links Cys-440 with Cys-475.

This sequence belongs to the glycosyl hydrolase 13 family. As to quaternary structure, monomer. Ca(2+) is required as a cofactor.

It is found in the secreted. The catalysed reaction is Endohydrolysis of (1-&gt;4)-alpha-D-glucosidic linkages in polysaccharides containing three or more (1-&gt;4)-alpha-linked D-glucose units.. The chain is Acid alpha-amylase from Aspergillus niger.